A 478-amino-acid chain; its full sequence is 9-divinyl ether synthase (478 aa).

Cysteine 431 provides a ligand contact to heme.

It belongs to the cytochrome P450 family. 9-divinyl ether synthase subfamily.

The catalysed reaction is (9S)-hydroperoxy-(10E,12Z)-octadecadienoate = colneleate + H2O. Its function is as follows. Involved in the biosynthesis of the anti-fungal toxins colneleic acid and colnelenic acid. The sequence is that of 9-divinyl ether synthase (DES) from Capsicum annuum (Capsicum pepper).